The sequence spans 432 residues: Protein arginine N-methyltransferase 2 (432 aa).

Residues Met-1–Ser-11 are compositionally biased toward low complexity. A disordered region spans residues Met-1 to Ala-22. An SH3 domain is found at Leu-29–Asn-88. Residues Asp-101–His-405 form the SAM-dependent MTase PRMT-type domain. Positions 114, 123, 147, 170, and 199 each coordinate S-adenosyl-L-methionine. Active-site residues include Glu-213 and Glu-222.

It belongs to the class I-like SAM-binding methyltransferase superfamily. Protein arginine N-methyltransferase family. As to quaternary structure, interacts with ctnnb1.

It localises to the cytoplasm. Its subcellular location is the nucleus. The catalysed reaction is L-arginyl-[protein] + 2 S-adenosyl-L-methionine = N(omega),N(omega)-dimethyl-L-arginyl-[protein] + 2 S-adenosyl-L-homocysteine + 2 H(+). Its function is as follows. Arginine methyltransferase that methylates the guanidino nitrogens of arginyl residues in proteins such as histones. Involved in growth regulation. Involved in embryonic dorsal development. The sequence is that of Protein arginine N-methyltransferase 2 (prmt2) from Xenopus laevis (African clawed frog).